A 557-amino-acid polypeptide reads, in one-letter code: 2-isopropylmalate synthase (557 aa).

The region spanning 33–307 is the Pyruvate carboxyltransferase domain; sequence PIWCSSDLRD…DPQLDFSDID (275 aa). Mg(2+)-binding residues include Asp42, His246, His248, and Asn282. The regulatory domain stretch occupies residues 439–557; that stretch reads ANAPYALVSH…SLSQQQAKAA (119 aa).

This sequence belongs to the alpha-IPM synthase/homocitrate synthase family. LeuA type 2 subfamily. In terms of assembly, homodimer. Mg(2+) serves as cofactor.

The protein resides in the cytoplasm. It catalyses the reaction 3-methyl-2-oxobutanoate + acetyl-CoA + H2O = (2S)-2-isopropylmalate + CoA + H(+). It functions in the pathway amino-acid biosynthesis; L-leucine biosynthesis; L-leucine from 3-methyl-2-oxobutanoate: step 1/4. Catalyzes the condensation of the acetyl group of acetyl-CoA with 3-methyl-2-oxobutanoate (2-ketoisovalerate) to form 3-carboxy-3-hydroxy-4-methylpentanoate (2-isopropylmalate). The polypeptide is 2-isopropylmalate synthase (Pseudomonas entomophila (strain L48)).